The following is a 178-amino-acid chain: Large ribosomal subunit protein uL6 (178 aa).

This sequence belongs to the universal ribosomal protein uL6 family. In terms of assembly, part of the 50S ribosomal subunit.

Its function is as follows. This protein binds to the 23S rRNA, and is important in its secondary structure. It is located near the subunit interface in the base of the L7/L12 stalk, and near the tRNA binding site of the peptidyltransferase center. In Corynebacterium jeikeium (strain K411), this protein is Large ribosomal subunit protein uL6.